A 135-amino-acid chain; its full sequence is Small ribosomal subunit protein uS12 (135 aa).

Residues 1–23 (MPTINQLVRKGRHSKTTKSDSPA) are disordered. At aspartate 102 the chain carries 3-methylthioaspartic acid.

Belongs to the universal ribosomal protein uS12 family. In terms of assembly, part of the 30S ribosomal subunit. Contacts proteins S8 and S17. May interact with IF1 in the 30S initiation complex.

Its function is as follows. With S4 and S5 plays an important role in translational accuracy. In terms of biological role, interacts with and stabilizes bases of the 16S rRNA that are involved in tRNA selection in the A site and with the mRNA backbone. Located at the interface of the 30S and 50S subunits, it traverses the body of the 30S subunit contacting proteins on the other side and probably holding the rRNA structure together. The combined cluster of proteins S8, S12 and S17 appears to hold together the shoulder and platform of the 30S subunit. This Lactobacillus gasseri (strain ATCC 33323 / DSM 20243 / BCRC 14619 / CIP 102991 / JCM 1131 / KCTC 3163 / NCIMB 11718 / NCTC 13722 / AM63) protein is Small ribosomal subunit protein uS12.